Here is a 239-residue protein sequence, read N- to C-terminus: MAKLGVNIDHVATIRQARGGVEPDPVAAAALAELAGADGITIHLREDRRHIQDRDLKLLRQTVKTKLNLEMAATAEMVAIALSVKPDMCTLVPEKRQELTTEGGLDVRIAMQGIAEAVERLQNGGIAVSLFVDPDPDQVKASSKVGSDYIEIHTGAFADAKDWKSEQDELERIGNAIKLGAKLGLGINAGHGLNYTNIRKVAALGGIEEYNIGHSIISRAVLVGLDRAVRDMVDLIKYA.

Residue asparagine 7 coordinates 3-amino-2-oxopropyl phosphate. 9 to 10 (DH) contacts 1-deoxy-D-xylulose 5-phosphate. Arginine 18 is a 3-amino-2-oxopropyl phosphate binding site. Histidine 43 functions as the Proton acceptor in the catalytic mechanism. Residues arginine 45 and histidine 50 each coordinate 1-deoxy-D-xylulose 5-phosphate. The active-site Proton acceptor is the glutamate 70. Residue threonine 100 coordinates 1-deoxy-D-xylulose 5-phosphate. Histidine 191 functions as the Proton donor in the catalytic mechanism. Residues glycine 192 and 213–214 (GH) contribute to the 3-amino-2-oxopropyl phosphate site.

It belongs to the PNP synthase family. Homooctamer; tetramer of dimers.

It localises to the cytoplasm. It catalyses the reaction 3-amino-2-oxopropyl phosphate + 1-deoxy-D-xylulose 5-phosphate = pyridoxine 5'-phosphate + phosphate + 2 H2O + H(+). Its pathway is cofactor biosynthesis; pyridoxine 5'-phosphate biosynthesis; pyridoxine 5'-phosphate from D-erythrose 4-phosphate: step 5/5. Catalyzes the complicated ring closure reaction between the two acyclic compounds 1-deoxy-D-xylulose-5-phosphate (DXP) and 3-amino-2-oxopropyl phosphate (1-amino-acetone-3-phosphate or AAP) to form pyridoxine 5'-phosphate (PNP) and inorganic phosphate. The sequence is that of Pyridoxine 5'-phosphate synthase from Geobacter metallireducens (strain ATCC 53774 / DSM 7210 / GS-15).